The chain runs to 77 residues: U8-hexatoxin-Mg1a (77 aa).

The N-terminal stretch at Met-1–Ala-22 is a signal peptide. Positions Tyr-23–Arg-43 are excised as a propeptide. Disulfide bonds link Cys-46–Cys-60, Cys-53–Cys-65, and Cys-59–Cys-76.

Expressed by the venom gland.

It localises to the secreted. In terms of biological role, intrathorax injection into crickets causes paralysis prolonged for more than 60 minutes, followed by recovery. In Macrothele gigas (Japanese funnel web spider), this protein is U8-hexatoxin-Mg1a.